Reading from the N-terminus, the 803-residue chain is Exocyst complex component 6 (803 aa).

It belongs to the SEC15 family. The exocyst complex is composed of EXOC1, EXOC2, EXOC3, EXOC4, EXOC5, EXOC6, EXOC7 and EXOC8. Interacts with CNTRL. Interacts with RAB11A in a GTP-dependent manner.

The protein resides in the cytoplasm. It is found in the perinuclear region. The protein localises to the cell projection. It localises to the growth cone. Its subcellular location is the midbody. The protein resides in the midbody ring. Functionally, component of the exocyst complex involved in the docking of exocytic vesicles with fusion sites on the plasma membrane. Together with RAB11A, RAB3IP, RAB8A, PARD3, PRKCI, ANXA2, CDC42 and DNMBP promotes transcytosis of PODXL to the apical membrane initiation sites (AMIS), apical surface formation and lumenogenesis. The polypeptide is Exocyst complex component 6 (EXOC6) (Canis lupus familiaris (Dog)).